Here is a 321-residue protein sequence, read N- to C-terminus: Lipoyl synthase (321 aa).

[4Fe-4S] cluster is bound by residues Cys68, Cys73, Cys79, Cys94, Cys98, Cys101, and Ser308. In terms of domain architecture, Radical SAM core spans 80–297 (FNHGTATFMI…KAIALDLGFT (218 aa)).

The protein belongs to the radical SAM superfamily. Lipoyl synthase family. [4Fe-4S] cluster serves as cofactor.

Its subcellular location is the cytoplasm. The enzyme catalyses [[Fe-S] cluster scaffold protein carrying a second [4Fe-4S](2+) cluster] + N(6)-octanoyl-L-lysyl-[protein] + 2 oxidized [2Fe-2S]-[ferredoxin] + 2 S-adenosyl-L-methionine + 4 H(+) = [[Fe-S] cluster scaffold protein] + N(6)-[(R)-dihydrolipoyl]-L-lysyl-[protein] + 4 Fe(3+) + 2 hydrogen sulfide + 2 5'-deoxyadenosine + 2 L-methionine + 2 reduced [2Fe-2S]-[ferredoxin]. It functions in the pathway protein modification; protein lipoylation via endogenous pathway; protein N(6)-(lipoyl)lysine from octanoyl-[acyl-carrier-protein]: step 2/2. Functionally, catalyzes the radical-mediated insertion of two sulfur atoms into the C-6 and C-8 positions of the octanoyl moiety bound to the lipoyl domains of lipoate-dependent enzymes, thereby converting the octanoylated domains into lipoylated derivatives. In Tolumonas auensis (strain DSM 9187 / NBRC 110442 / TA 4), this protein is Lipoyl synthase.